We begin with the raw amino-acid sequence, 313 residues long: Ribosomal RNA small subunit methyltransferase H (313 aa).

S-adenosyl-L-methionine-binding positions include 35-37, aspartate 55, phenylalanine 81, aspartate 103, and glutamine 110; that span reads GGH.

It belongs to the methyltransferase superfamily. RsmH family.

The protein resides in the cytoplasm. The catalysed reaction is cytidine(1402) in 16S rRNA + S-adenosyl-L-methionine = N(4)-methylcytidine(1402) in 16S rRNA + S-adenosyl-L-homocysteine + H(+). In terms of biological role, specifically methylates the N4 position of cytidine in position 1402 (C1402) of 16S rRNA. This chain is Ribosomal RNA small subunit methyltransferase H, found in Azotobacter vinelandii (strain DJ / ATCC BAA-1303).